A 486-amino-acid chain; its full sequence is CREB-regulated transcription coactivator 1 homolog (486 aa).

The disordered stretch occupies residues 1–62 (MSNSNTPRKF…APMPIPQQGL (62 aa)). Over residues 9–23 (KFSEKIAILERKQNE) the composition is skewed to basic and acidic residues. The segment covering 34–52 (QVQSITHHPTDSSGSSTAT) has biased composition (polar residues). Phosphoserine; by AMPK is present on serine 76. Positions 103-166 (PIQGHRSRSP…PPYNQPGQLV (64 aa)) are disordered. Positions 144-160 (RTPPQHPQYTPYGPPYN) are enriched in pro residues. A Phosphoserine; by AMPK modification is found at serine 179. 3 disordered regions span residues 214–278 (SMPG…QSPN), 327–417 (FNQD…SNSP), and 460–486 (APPQ…MLQN). Polar residues-rich tracts occupy residues 224–245 (PNSQ…QGSP), 387–402 (PESQ…QLDP), and 461–475 (PPQT…NNSF).

Belongs to the TORC family. As to quaternary structure, interacts with crh-1. In terms of processing, phosphorylated by AMPK at Ser-76 and Ser-179. Dephosphorylated by tax-6, the catalytic subunit of calcineurin. In terms of tissue distribution, expressed throughout the intestine and in head and tail neurons. Expressed in octopaminergic RIC neurons.

Its subcellular location is the nucleus. It localises to the cytoplasm. The protein resides in the cytosol. Its function is as follows. Transcriptional coactivator for crh-1, the homolog of vertebrate transcription factor CREB1. Regulates the transcription of metabolic genes and may have a role in mitochondrial dynamics and metabolism. Involved in modulation of lifespan. Through crh-1, counteracts the pro-lifespan-extension signals of AMPK both cell autonomously and, when expressed in neurons, at a systemic level, possibly using the catecholamine analog, octopamine, as a messenger. The polypeptide is CREB-regulated transcription coactivator 1 homolog (Caenorhabditis elegans).